Consider the following 331-residue polypeptide: Phosphate acyltransferase (331 aa).

Belongs to the PlsX family. In terms of assembly, homodimer. Probably interacts with PlsY.

The protein localises to the cytoplasm. It carries out the reaction a fatty acyl-[ACP] + phosphate = an acyl phosphate + holo-[ACP]. The protein operates within lipid metabolism; phospholipid metabolism. Catalyzes the reversible formation of acyl-phosphate (acyl-PO(4)) from acyl-[acyl-carrier-protein] (acyl-ACP). This enzyme utilizes acyl-ACP as fatty acyl donor, but not acyl-CoA. The protein is Phosphate acyltransferase of Wolinella succinogenes (strain ATCC 29543 / DSM 1740 / CCUG 13145 / JCM 31913 / LMG 7466 / NCTC 11488 / FDC 602W) (Vibrio succinogenes).